The following is a 107-amino-acid chain: Universal stress protein B homolog (107 aa).

2 helical membrane passes run 6-26 (IILFALMVVTGVNLARYLTAL) and 86-106 (VRELFVLSVSLTGVTLLAAFL).

The protein belongs to the universal stress protein B family.

It is found in the cell inner membrane. This chain is Universal stress protein B homolog, found in Vibrio vulnificus (strain CMCP6).